We begin with the raw amino-acid sequence, 120 residues long: Small ribosomal subunit protein eS24 (120 aa).

The tract at residues 101-120 is disordered; sequence RDAGTKQKKGGSKGGQGAKG.

This sequence belongs to the eukaryotic ribosomal protein eS24 family.

The chain is Small ribosomal subunit protein eS24 from Saccharolobus islandicus (strain M.16.4 / Kamchatka #3) (Sulfolobus islandicus).